The sequence spans 116 residues: Protein Rev (116 aa).

Phosphoserine; by host CK2 is present on S8. The homomultimerization stretch occupies residues 18–26 (LIKSLYQSN). Disordered stretches follow at residues 20–46 (KSLY…RRWR) and 84–116 (DSSE…GAKE). The short motif at 34–50 (TRQARRNRRRRWRERQR) is the Nuclear localization signal and RNA-binding (RRE) element. A compositionally biased stretch (basic residues) spans 36 to 46 (QARRNRRRRWR). Residues 73 to 84 (LQLPPLERLTLD) carry the Nuclear export signal and binding to XPO1 motif. Residues 88-98 (DCGTSGTQGVG) are compositionally biased toward polar residues. Phosphoserine; by host occurs at positions 92 and 99.

The protein belongs to the HIV-1 REV protein family. As to quaternary structure, homomultimer; when bound to the RRE. Multimeric assembly is essential for activity and may involve XPO1. Binds to human KPNB1, XPO1, TNPO1, RANBP5 and IPO7. Interacts with the viral Integrase. Interacts with human KHDRBS1. Interacts with human NAP1; this interaction decreases Rev multimerization and stimulates its activity. Interacts with human DEAD-box helicases DDX3 and DDX24; these interactions may serve for viral RNA export to the cytoplasm and packaging, respectively. Interacts with human PSIP1; this interaction may inhibit HIV-1 DNA integration by promoting dissociation of the Integrase-LEDGF/p75 complex. In terms of processing, asymmetrically arginine dimethylated at one site by host PRMT6. Methylation impairs the RNA-binding activity and export of viral RNA from the nucleus to the cytoplasm. Phosphorylated by protein kinase CK2. Presence of, and maybe binding to the N-terminus of the regulatory beta subunit of CK2 is necessary for CK2-mediated Rev's phosphorylation.

It is found in the host nucleus. The protein localises to the host nucleolus. It localises to the host cytoplasm. Its function is as follows. Escorts unspliced or incompletely spliced viral pre-mRNAs (late transcripts) out of the nucleus of infected cells. These pre-mRNAs carry a recognition sequence called Rev responsive element (RRE) located in the env gene, that is not present in fully spliced viral mRNAs (early transcripts). This function is essential since most viral proteins are translated from unspliced or partially spliced pre-mRNAs which cannot exit the nucleus by the pathway used by fully processed cellular mRNAs. Rev itself is translated from a fully spliced mRNA that readily exits the nucleus. Rev's nuclear localization signal (NLS) binds directly to KPNB1/Importin beta-1 without previous binding to KPNA1/Importin alpha-1. KPNB1 binds to the GDP bound form of RAN (Ran-GDP) and targets Rev to the nucleus. In the nucleus, the conversion from Ran-GDP to Ran-GTP dissociates Rev from KPNB1 and allows Rev's binding to the RRE in viral pre-mRNAs. Rev multimerization on the RRE via cooperative assembly exposes its nuclear export signal (NES) to the surface. Rev can then form a complex with XPO1/CRM1 and Ran-GTP, leading to nuclear export of the complex. Conversion from Ran-GTP to Ran-GDP mediates dissociation of the Rev/RRE/XPO1/RAN complex, so that Rev can return to the nucleus for a subsequent round of export. Beside KPNB1, also seems to interact with TNPO1/Transportin-1, RANBP5/IPO5 and IPO7/RANBP7 for nuclear import. The nucleoporin-like HRB/RIP is an essential cofactor that probably indirectly interacts with Rev to release HIV RNAs from the perinuclear region to the cytoplasm. This chain is Protein Rev, found in Human immunodeficiency virus type 1 group M subtype B (isolate RF/HAT3) (HIV-1).